Consider the following 366-residue polypeptide: Di-N-acetylchitobiase (366 aa).

The N-terminal stretch at 1–22 (MALCGLPEFTLLLLPLLARLSA) is a signal peptide. The region spanning 23–366 (GDCPCSEAAL…EMWGALKPRL (344 aa)) is the GH18 domain. Residue Glu-127 is the Proton donor of the active site. Residues Asn-131, Asn-177, Asn-212, Asn-246, and Asn-283 are each glycosylated (N-linked (GlcNAc...) asparagine).

The protein belongs to the glycosyl hydrolase 18 family.

The protein resides in the lysosome. Involved in the degradation of asparagine-linked glycoproteins. Hydrolyze of N-acetyl-beta-D-glucosamine (1-4)N-acetylglucosamine chitobiose core from the reducing end of the bond, it requires prior cleavage by glycosylasparaginase. The chain is Di-N-acetylchitobiase (Ctbs) from Mus musculus (Mouse).